We begin with the raw amino-acid sequence, 630 residues long: Sodium-dependent serotonin transporter (630 aa).

Topologically, residues 1 to 87 (METTPLNSQK…ERETWGKKVD (87 aa)) are cytoplasmic. Residues 31-59 (VPTPGDKVESGQISNGYSAVPSPGAGDDT) are disordered. Position 47 is a phosphotyrosine (tyrosine 47). A helical transmembrane segment spans residues 88-112 (FLLSVIGYAVDLGNVWRFPYICYQN). Na(+)-binding residues include glycine 94, alanine 96, valine 97, aspartate 98, and asparagine 101. Aspartate 98 contributes to the serotonin binding site. Residues 113–115 (GGG) are Extracellular-facing. Residues 116–135 (AFLIPYTIMAIFGGIPLFYM) traverse the membrane as a helical segment. At 136–160 (ELALGQYHRNGCISIWRKICPIFKG) the chain is on the cytoplasmic side. The residue at position 142 (tyrosine 142) is a Phosphotyrosine. A helical transmembrane segment spans residues 161-186 (IGYAICIIAFYIASYYNTIMAWALYY). The Extracellular segment spans residues 187-252 (LISSFTDQLP…KGLQDLGGIS (66 aa)). Cysteine 200 and cysteine 209 form a disulfide bridge. 2 N-linked (GlcNAc...) asparagine glycosylation sites follow: asparagine 208 and asparagine 217. The helical transmembrane segment at 253-271 (WQLALCIMLIFTVIYFSIW) threads the bilayer. The Cytoplasmic segment spans residues 272 to 277 (KGVKTS). A Phosphothreonine modification is found at threonine 276. Residues 278–297 (GKVVWVTATFPYIILSVLLV) traverse the membrane as a helical segment. The Extracellular segment spans residues 298-324 (RGATLPGAWRGVLFYLKPNWQKLLETG). A helical transmembrane segment spans residues 325-347 (VWIDAAAQIFFSLGPGFGVLLAF). Residue serine 336 coordinates Na(+). Topologically, residues 348 to 360 (ASYNKFNNNCYQD) are cytoplasmic. The helical transmembrane segment at 361–380 (ALVTSVVNCMTSFVSGFVIF) threads the bilayer. Asparagine 368 is a Na(+) binding site. The Extracellular segment spans residues 381 to 421 (TVLGYMAEMRNEDVSEVAKDAGPSLLFITYAEAIANMPAST). A helical transmembrane segment spans residues 422–443 (FFAIIFFLMLITLGLDSTFAGL). Leucine 434, aspartate 437, and serine 438 together coordinate Na(+). Threonine 439 contacts serotonin. At 444 to 463 (EGVITAVLDEFPHIWAKRRE) the chain is on the cytoplasmic side. The chain crosses the membrane as a helical span at residues 464-483 (WFVLAVVITCFFGSLVTLTF). Topologically, residues 484-494 (GGAYVVKLLEE) are extracellular. 2 residues coordinate serotonin: glutamate 494 and tyrosine 495. The helical transmembrane segment at 495 to 516 (YATGPAVLTVALIEAVAVSWFY) threads the bilayer. Topologically, residues 517–538 (GITQFCRDVKEMLGFSPGWFWR) are cytoplasmic. Residues 539-558 (ICWVAISPLFLLFIICSFLM) traverse the membrane as a helical segment. Serotonin contacts are provided by phenylalanine 556 and serine 559. The Extracellular portion of the chain corresponds to 559–574 (SPPQLRLFQYNYPHWS). Residues 575 to 595 (IILGYCIGTSSFVCIPTYIAY) form a helical membrane-spanning segment. Residues 596–630 (RLISTPGTFKERIIKSITPETPTEIPCGDVRLNAV) lie on the Cytoplasmic side of the membrane. Residues 616–624 (TPTEIPCGD) form an interaction with RAB4A region.

Belongs to the sodium:neurotransmitter symporter (SNF) (TC 2.A.22) family. SLC6A4 subfamily. In terms of assembly, monomer or homooligomer. Interacts (via C-terminus) with SCAMP2; the interaction is direct and retains transporter molecules intracellularly. Interacts with filamentous actin and STX1A. Interacts (via the N-terminus) with STX1A (via the H3 domain); this interaction regulates SLC4A6 channel conductance. Interacts with SEC23A, SEC24C and PATJ. Interacts with NOS1; the interaction may diminish the cell surface localization of SERT in the brain and, correspondingly, reduce serotonin reuptake. Interacts with TGFB1I1. Interacts with ITGAV:ITGB3. Interacts (via C-terminus) with ITGB3; this interaction regulates SLC6A4 trafficking. Phosphorylation at Thr-276 increases 5-HT uptake and is required for cGMP-mediated SERT regulation.

The protein resides in the cell membrane. The protein localises to the endomembrane system. Its subcellular location is the endosome membrane. It localises to the synapse. It is found in the cell junction. The protein resides in the focal adhesion. The protein localises to the cell projection. Its subcellular location is the neuron projection. It catalyses the reaction serotonin(out) + K(+)(in) + Na(+)(out) + H(+)(in) = serotonin(in) + K(+)(out) + Na(+)(in) + H(+)(out). Serotonin transporter that cotransports serotonin with one Na(+) ion in exchange for one K(+) ion and possibly one proton in an overall electroneutral transport cycle. Transports serotonin across the plasma membrane from the extracellular compartment to the cytosol thus limiting serotonin intercellular signaling. Essential for serotonin homeostasis in the central nervous system. In the developing somatosensory cortex, acts in glutamatergic neurons to control serotonin uptake and its trophic functions accounting for proper spatial organization of cortical neurons and elaboration of sensory circuits. In the mature cortex, acts primarily in brainstem raphe neurons to mediate serotonin uptake from the synaptic cleft back into the pre-synaptic terminal thus terminating serotonin signaling at the synapse. Modulates mucosal serotonin levels in the gastrointestinal tract through uptake and clearance of serotonin in enterocytes. Required for enteric neurogenesis and gastrointestinal reflexes. Regulates blood serotonin levels by ensuring rapid high affinity uptake of serotonin from plasma to platelets, where it is further stored in dense granules via vesicular monoamine transporters and then released upon stimulation. Mechanistically, the transport cycle starts with an outward-open conformation having Na1(+) and Cl(-) sites occupied. The binding of a second extracellular Na2(+) ion and serotonin substrate leads to structural changes to outward-occluded to inward-occluded to inward-open, where the Na2(+) ion and serotonin are released into the cytosol. Binding of intracellular K(+) ion induces conformational transitions to inward-occluded to outward-open and completes the cycle by releasing K(+) possibly together with a proton bound to Asp-98 into the extracellular compartment. Na1(+) and Cl(-) ions remain bound throughout the transport cycle. Additionally, displays serotonin-induced channel-like conductance for monovalent cations, mainly Na(+) ions. The channel activity is uncoupled from the transport cycle and may contribute to the membrane resting potential or excitability. This chain is Sodium-dependent serotonin transporter (SLC6A4), found in Macaca mulatta (Rhesus macaque).